A 121-amino-acid chain; its full sequence is Large ribosomal subunit protein uL18 (121 aa).

The protein belongs to the universal ribosomal protein uL18 family. In terms of assembly, part of the 50S ribosomal subunit; part of the 5S rRNA/L5/L18/L25 subcomplex. Contacts the 5S and 23S rRNAs.

In terms of biological role, this is one of the proteins that bind and probably mediate the attachment of the 5S RNA into the large ribosomal subunit, where it forms part of the central protuberance. The chain is Large ribosomal subunit protein uL18 from Buchnera aphidicola subsp. Baizongia pistaciae (strain Bp).